A 603-amino-acid polypeptide reads, in one-letter code: Aspartate--tRNA(Asp/Asn) ligase (603 aa).

The aspartate stretch occupies residues 205-208; that stretch reads QLFK. Arginine 227 contacts L-aspartate. ATP contacts are provided by residues 227 to 229 and glutamine 236; that span reads RDE. Histidine 463 is an L-aspartate binding site. ATP is bound at residue glutamate 497. Arginine 504 contacts L-aspartate. ATP is bound at residue 549–552; the sequence is GMDR.

The protein belongs to the class-II aminoacyl-tRNA synthetase family. Type 1 subfamily. As to quaternary structure, homodimer.

The protein resides in the cytoplasm. It carries out the reaction tRNA(Asx) + L-aspartate + ATP = L-aspartyl-tRNA(Asx) + AMP + diphosphate. Aspartyl-tRNA synthetase with relaxed tRNA specificity since it is able to aspartylate not only its cognate tRNA(Asp) but also tRNA(Asn). Reaction proceeds in two steps: L-aspartate is first activated by ATP to form Asp-AMP and then transferred to the acceptor end of tRNA(Asp/Asn). This is Aspartate--tRNA(Asp/Asn) ligase from Anaeromyxobacter dehalogenans (strain 2CP-C).